Reading from the N-terminus, the 279-residue chain is Ribosomal RNA small subunit methyltransferase J (279 aa).

S-adenosyl-L-methionine contacts are provided by residues 138 to 139 and D194; that span reads ER.

Belongs to the methyltransferase superfamily. RsmJ family.

It is found in the cytoplasm. It carries out the reaction guanosine(1516) in 16S rRNA + S-adenosyl-L-methionine = N(2)-methylguanosine(1516) in 16S rRNA + S-adenosyl-L-homocysteine + H(+). Functionally, specifically methylates the guanosine in position 1516 of 16S rRNA. The chain is Ribosomal RNA small subunit methyltransferase J from Acinetobacter baumannii (strain ATCC 17978 / DSM 105126 / CIP 53.77 / LMG 1025 / NCDC KC755 / 5377).